The primary structure comprises 462 residues: Cysteine--tRNA ligase (462 aa).

Position 30 (Cys-30) interacts with Zn(2+). A 'HIGH' region motif is present at residues 32–42 (PTVYDRAHLGN). The Zn(2+) site is built by Cys-221, His-246, and Glu-250. The 'KMSKS' region signature appears at 279 to 283 (KMSKS). Lys-282 lines the ATP pocket.

This sequence belongs to the class-I aminoacyl-tRNA synthetase family. As to quaternary structure, monomer. Zn(2+) serves as cofactor.

It is found in the cytoplasm. It catalyses the reaction tRNA(Cys) + L-cysteine + ATP = L-cysteinyl-tRNA(Cys) + AMP + diphosphate. The protein is Cysteine--tRNA ligase of Paracoccus denitrificans (strain Pd 1222).